Here is a 113-residue protein sequence, read N- to C-terminus: Urease subunit beta (113 aa).

It belongs to the urease beta subunit family. In terms of assembly, heterotrimer of UreA (gamma), UreB (beta) and UreC (alpha) subunits. Three heterotrimers associate to form the active enzyme.

The protein resides in the cytoplasm. The enzyme catalyses urea + 2 H2O + H(+) = hydrogencarbonate + 2 NH4(+). It participates in nitrogen metabolism; urea degradation; CO(2) and NH(3) from urea (urease route): step 1/1. This is Urease subunit beta from Cyanothece sp. (strain PCC 7425 / ATCC 29141).